The primary structure comprises 419 residues: Vacuolar aspartic protease (419 aa).

Residues 1 to 22 form the signal peptide; that stretch reads MQLSLSALTTVALALTSSLVDA. Positions 104-415 constitute a Peptidase A1 domain; that stretch reads YFTEIQIGTP…DLDKNAVGLA (312 aa). Residue D122 is part of the active site. A disulfide bridge connects residues C135 and C140. N-linked (GlcNAc...) asparagine glycosylation is present at N157. D307 is an active-site residue. C341 and C374 are disulfide-bonded. N-linked (GlcNAc...) asparagine glycosylation is present at N358. The short motif at 417–419 is the Microbody targeting signal element; it reads TKV.

Belongs to the peptidase A1 family.

The protein resides in the vacuole. This chain is Vacuolar aspartic protease (APR1), found in Candida albicans (Yeast).